A 155-amino-acid polypeptide reads, in one-letter code: Ribonuclease H (155 aa).

Positions 5-146 (LAEVVEIFTD…ADMLANRGVQ (142 aa)) constitute an RNase H type-1 domain. 4 residues coordinate Mg(2+): aspartate 14, glutamate 52, aspartate 74, and aspartate 138.

This sequence belongs to the RNase H family. In terms of assembly, monomer. The cofactor is Mg(2+).

The protein resides in the cytoplasm. It catalyses the reaction Endonucleolytic cleavage to 5'-phosphomonoester.. Functionally, endonuclease that specifically degrades the RNA of RNA-DNA hybrids. The polypeptide is Ribonuclease H (Nitrosospira multiformis (strain ATCC 25196 / NCIMB 11849 / C 71)).